Consider the following 165-residue polypeptide: UPF0114 protein in repA1-repA2 intergenic region (165 aa).

Transmembrane regions (helical) follow at residues 10 to 32 (YASRWLMFPVYIGLSLGFILLTL), 53 to 75 (LVLVVLSLIDISLVGGLLVMVMF), and 134 to 156 (DQIMWCVLIHLTFVISAFGMACI).

This sequence belongs to the UPF0114 family.

Its subcellular location is the cell membrane. The chain is UPF0114 protein in repA1-repA2 intergenic region from Buchnera aphidicola subsp. Baizongia pistaciae (strain Bp).